A 1343-amino-acid polypeptide reads, in one-letter code: DNA-directed RNA polymerase subunit beta (1343 aa).

It belongs to the RNA polymerase beta chain family. As to quaternary structure, the RNAP catalytic core consists of 2 alpha, 1 beta, 1 beta' and 1 omega subunit. When a sigma factor is associated with the core the holoenzyme is formed, which can initiate transcription.

It catalyses the reaction RNA(n) + a ribonucleoside 5'-triphosphate = RNA(n+1) + diphosphate. Its function is as follows. DNA-dependent RNA polymerase catalyzes the transcription of DNA into RNA using the four ribonucleoside triphosphates as substrates. In Buchnera aphidicola subsp. Cinara cedri (strain Cc), this protein is DNA-directed RNA polymerase subunit beta.